A 444-amino-acid polypeptide reads, in one-letter code: Docking protein 3 (444 aa).

Positions 7-123 constitute a PH domain; that stretch reads PVKDGLLYQQ…WMDPICQLAF (117 aa). The disordered stretch occupies residues 47–66; that stretch reads DVRDGGLGPGGDRPAGPGRR. At S138 the chain carries Phosphoserine. In terms of domain architecture, IRS-type PTB spans 157–261; the sequence is EVAEFPVVVQ…ARQRERLPEL (105 aa). Phosphoserine occurs at positions 274, 308, and 314. At Y325 the chain carries Phosphotyrosine. The interval 354-390 is disordered; sequence GLSNGGPEAQEGPPGGRSPLGSPIYHNSEELSWPGSA. Positions 358–376 are enriched in low complexity; sequence GGPEAQEGPPGGRSPLGSP. S371 carries the post-translational modification Phosphoserine.

The protein belongs to the DOK family. Type A subfamily. In terms of assembly, on tyrosine phosphorylation, interacts with CSK and INPP5D/SHIP1 via their SH2 domains. Binds ABL1 through the PTB domain and in a kinase-dependent manner. Does not interact with RasGAP. Post-translationally, constitutively tyrosine-phosphorylated. In terms of processing, on IL2 stimulation, phosphorylated on C-terminal tyrosine residues possibly by Src kinases. Can also be phosphorylated by ABL1 kinase.

It localises to the cytoplasm. It is found in the cell membrane. In terms of biological role, DOK proteins are enzymatically inert adaptor or scaffolding proteins. They provide a docking platform for the assembly of multimolecular signaling complexes. DOK3 is a negative regulator of JNK signaling in B-cells through interaction with INPP5D/SHIP1. May modulate ABL1 function. This is Docking protein 3 (Dok3) from Rattus norvegicus (Rat).